A 423-amino-acid chain; its full sequence is Glutamate-1-semialdehyde 2,1-aminomutase (423 aa).

Lys-259 is modified (N6-(pyridoxal phosphate)lysine).

It belongs to the class-III pyridoxal-phosphate-dependent aminotransferase family. HemL subfamily. Homodimer. Pyridoxal 5'-phosphate serves as cofactor.

The protein resides in the cytoplasm. The catalysed reaction is (S)-4-amino-5-oxopentanoate = 5-aminolevulinate. It functions in the pathway porphyrin-containing compound metabolism; protoporphyrin-IX biosynthesis; 5-aminolevulinate from L-glutamyl-tRNA(Glu): step 2/2. This chain is Glutamate-1-semialdehyde 2,1-aminomutase, found in Thermosipho melanesiensis (strain DSM 12029 / CIP 104789 / BI429).